A 61-amino-acid polypeptide reads, in one-letter code: Small ribosomal subunit protein uS14 (61 aa).

The Zn(2+) site is built by Cys-24, Cys-27, Cys-40, and Cys-43.

It belongs to the universal ribosomal protein uS14 family. Zinc-binding uS14 subfamily. Part of the 30S ribosomal subunit. Contacts proteins S3 and S10. It depends on Zn(2+) as a cofactor.

Binds 16S rRNA, required for the assembly of 30S particles and may also be responsible for determining the conformation of the 16S rRNA at the A site. This Thermosipho africanus (strain TCF52B) protein is Small ribosomal subunit protein uS14.